Reading from the N-terminus, the 143-residue chain is Transcriptional regulator MraZ (143 aa).

SpoVT-AbrB domains follow at residues 5–47 (TYTP…PKEE) and 76–119 (TDEQ…DKQA).

Belongs to the MraZ family. As to quaternary structure, forms oligomers.

It localises to the cytoplasm. The protein localises to the nucleoid. This chain is Transcriptional regulator MraZ, found in Nocardia farcinica (strain IFM 10152).